The following is a 424-amino-acid chain: MRHDDVFRLNEPRRVAVLAVHTSPLAQPGTGDAGGMNVYVLQTALHLARRGIEVEIFTRATASADPPVQRVVPGVVVRNVVAGPFEGLDKYDLPTQLCAFAAGVLRAEASHEPGYYDIVHSHYWLSGQVGWLARDRWAVPLVHTAHTLAAVKNAALAQGDSPEPPLRTVGEQQVVDEADRLIVNTDDEARQLISIHHADPARIDVVHPGVDLDVFRPGDRRAARAALGLPLDEDIVAFVGRIQPLKAPDIVLRAAAKLPGVRIVVAGGPSGTGLASPDGLALLADELGISARVTFLPPQSRPNLATLFQAANLVAVPSYSESFGLVALEAQACGTPVAAAAVGGLPVAVRDGVTGTLVAGHDVDHWADALAGLLRAPAPAAAAMSRAAAAHAATFSWDHTTDALLASYRRAIREYTTERRGVGA.

His-21 is a binding site for 1D-myo-inositol 3-phosphate. UDP-N-acetyl-alpha-D-glucosamine-binding positions include 27–28 (QP) and Gly-35. 1D-myo-inositol 3-phosphate-binding positions include 32-37 (DAGGMN), Lys-90, Tyr-123, Thr-147, and Arg-167. UDP-N-acetyl-alpha-D-glucosamine is bound by residues Arg-241, Lys-246, and Gln-299. Positions 308, 309, and 311 each coordinate Mg(2+). UDP-N-acetyl-alpha-D-glucosamine contacts are provided by Glu-321 and Glu-329. Position 335 (Thr-335) interacts with Mg(2+).

Belongs to the glycosyltransferase group 1 family. MshA subfamily. Homodimer.

The enzyme catalyses 1D-myo-inositol 3-phosphate + UDP-N-acetyl-alpha-D-glucosamine = 1D-myo-inositol 2-acetamido-2-deoxy-alpha-D-glucopyranoside 3-phosphate + UDP + H(+). In terms of biological role, catalyzes the transfer of a N-acetyl-glucosamine moiety to 1D-myo-inositol 3-phosphate to produce 1D-myo-inositol 2-acetamido-2-deoxy-glucopyranoside 3-phosphate in the mycothiol biosynthesis pathway. In Mycobacterium avium (strain 104), this protein is D-inositol 3-phosphate glycosyltransferase.